The chain runs to 248 residues: Ribosomal RNA small subunit methyltransferase J (248 aa).

S-adenosyl-L-methionine contacts are provided by residues arginine 98–aspartate 99, glutamate 114–arginine 115, serine 150–serine 151, and aspartate 168.

The protein belongs to the methyltransferase superfamily. RsmJ family.

It localises to the cytoplasm. The enzyme catalyses guanosine(1516) in 16S rRNA + S-adenosyl-L-methionine = N(2)-methylguanosine(1516) in 16S rRNA + S-adenosyl-L-homocysteine + H(+). Specifically methylates the guanosine in position 1516 of 16S rRNA. The sequence is that of Ribosomal RNA small subunit methyltransferase J from Shewanella baltica (strain OS185).